The chain runs to 817 residues: Dynamin-related protein 5A (817 aa).

Over residues 1 to 20 (MANSNTYLTTPTKTPSSRRN) the composition is skewed to polar residues. Positions 1–37 (MANSNTYLTTPTKTPSSRRNQQSQSKMQSHSKDPINA) are disordered. Positions 59-346 (KLPIPEIVAI…LQKRYKEAAP (288 aa)) constitute a Dynamin-type G domain. The interval 69–76 (GGQSDGKS) is G1 motif. 69 to 76 (GGQSDGKS) provides a ligand contact to GTP. The G2 motif stretch occupies residues 95-97 (GTR). Positions 175-178 (DTPG) are G3 motif. GTP-binding positions include 175–179 (DTPGF) and 244–247 (SKFD). Residues 244–247 (SKFD) are G4 motif. Residues 280 to 283 (LPKD) are G5 motif. Disordered stretches follow at residues 405–425 (APEQ…IGSW) and 616–658 (LSDT…ETPS). Positions 618 to 629 (DTSRDEPMKDQE) are enriched in basic and acidic residues.

This sequence belongs to the TRAFAC class dynamin-like GTPase superfamily. Dynamin/Fzo/YdjA family. In terms of tissue distribution, expressed in root and leaf meristems.

The protein localises to the cytoplasm. The protein resides in the cytoskeleton. It localises to the phragmoplast. In terms of biological role, probable microtubule-associated force-producing protein that is targeted to the forming cell plate during cytokinesis. May play a role in cell division. In Arabidopsis thaliana (Mouse-ear cress), this protein is Dynamin-related protein 5A (DRP5A).